Here is a 180-residue protein sequence, read N- to C-terminus: ATP synthase subunit delta (180 aa).

The protein belongs to the ATPase delta chain family. In terms of assembly, F-type ATPases have 2 components, F(1) - the catalytic core - and F(0) - the membrane proton channel. F(1) has five subunits: alpha(3), beta(3), gamma(1), delta(1), epsilon(1). CF(0) has four main subunits: a(1), b(1), b'(1) and c(10-14). The alpha and beta chains form an alternating ring which encloses part of the gamma chain. F(1) is attached to F(0) by a central stalk formed by the gamma and epsilon chains, while a peripheral stalk is formed by the delta, b and b' chains.

The protein resides in the cellular thylakoid membrane. In terms of biological role, f(1)F(0) ATP synthase produces ATP from ADP in the presence of a proton or sodium gradient. F-type ATPases consist of two structural domains, F(1) containing the extramembraneous catalytic core and F(0) containing the membrane proton channel, linked together by a central stalk and a peripheral stalk. During catalysis, ATP synthesis in the catalytic domain of F(1) is coupled via a rotary mechanism of the central stalk subunits to proton translocation. This protein is part of the stalk that links CF(0) to CF(1). It either transmits conformational changes from CF(0) to CF(1) or is implicated in proton conduction. In Prochlorococcus marinus (strain MIT 9312), this protein is ATP synthase subunit delta.